The sequence spans 562 residues: NAD-dependent histone deacetylase SIR2 (562 aa).

The segment at 1-67 is disordered; sequence MTIPHMKYAV…RETNTTDPLG (67 aa). The segment covering 11–25 has biased composition (polar residues); that stretch reads SKTSENKVSNTVSPT. The span at 26-36 shows a compositional bias: basic and acidic residues; that stretch reads QDKDAIRKQPD. Residues 237–527 form the Deacetylase sirtuin-type domain; the sequence is RLSNFFTIDH…AMVAQKCGWT (291 aa). Residues 262-281 and 344-347 each bind NAD(+); these read GAGV…EGFY and QNID. Catalysis depends on His364, which acts as the Proton acceptor. Residues Cys372, Cys375, Cys396, and Cys399 each coordinate Zn(2+). Residues 471–473, 496–498, and Cys513 each bind NAD(+); these read GTS and NRD.

Belongs to the sirtuin family. Class I subfamily. In terms of assembly, homomultimer. Forms a complex with SIR3 and SIR4. Component of the RENT complex, at least composed of SIR2, CDC14 and NET1. The RENT complex interacts with FOB1. Interacts with ESC8. Interacts with and ZDS2. Interacts with MCM10. Interacts with SLX5. Interacts with NSI1. Zn(2+) is required as a cofactor.

Its subcellular location is the nucleus. The protein localises to the nucleolus. It catalyses the reaction N(6)-acetyl-L-lysyl-[protein] + NAD(+) + H2O = 2''-O-acetyl-ADP-D-ribose + nicotinamide + L-lysyl-[protein]. Its activity is regulated as follows. Its activity is increased by calorie restriction, which slows the pace of aging and increases maximum lifespan. Activated by resveratrol (3,5,4'-trihydroxy-trans-stilbene), which is found in red wine. In terms of biological role, NAD-dependent deacetylase, which participates in a wide range of cellular events including chromosome silencing, chromosome segregation, DNA recombination and the determination of life span. Involved in transcriptional repression of the silent mating-type loci HML and HMR and telomeric silencing via its association with SIR3 and SIR4. Plays a central role in ribosomal DNA (rDNA) silencing via its association with the RENT complex, preventing hyperrecombination, and repressing transcription from foreign promoters, which contributes to extending life span. Probably represses transcription via the formation of heterochromatin structure, which involves the compaction of chromatin fiber into a more condensed form, although this complex in at least one case can still bind euchromatic levels of positive transcription regulators. Although it displays some NAD-dependent histone deacetylase activity on histone H3K9Ac and H3K14Ac and histone H4K16Ac in vitro, such activity is unclear in vivo and may not be essential. The protein is NAD-dependent histone deacetylase SIR2 (SIR2) of Saccharomyces cerevisiae (strain ATCC 204508 / S288c) (Baker's yeast).